Here is a 273-residue protein sequence, read N- to C-terminus: 2,3,4,5-tetrahydropyridine-2,6-dicarboxylate N-succinyltransferase (273 aa).

Substrate is bound by residues Arg-105 and Asp-142.

This sequence belongs to the transferase hexapeptide repeat family. As to quaternary structure, homotrimer.

Its subcellular location is the cytoplasm. The enzyme catalyses (S)-2,3,4,5-tetrahydrodipicolinate + succinyl-CoA + H2O = (S)-2-succinylamino-6-oxoheptanedioate + CoA. It functions in the pathway amino-acid biosynthesis; L-lysine biosynthesis via DAP pathway; LL-2,6-diaminopimelate from (S)-tetrahydrodipicolinate (succinylase route): step 1/3. This chain is 2,3,4,5-tetrahydropyridine-2,6-dicarboxylate N-succinyltransferase, found in Bordetella bronchiseptica (strain ATCC BAA-588 / NCTC 13252 / RB50) (Alcaligenes bronchisepticus).